The primary structure comprises 280 residues: Cell division protein SepF (280 aa).

Residues 22 to 117 are disordered; sequence DYVDDRAPRA…DDYPEDAYGE (96 aa). 2 stretches are compositionally biased toward basic and acidic residues: residues 25 to 36 and 53 to 83; these read DDRAPRASERGG and RYGEDRYSADRFGPERFGAERFGPDRFGADR.

Belongs to the SepF family. As to quaternary structure, homodimer. Interacts with FtsZ.

It is found in the cytoplasm. Functionally, cell division protein that is part of the divisome complex and is recruited early to the Z-ring. Probably stimulates Z-ring formation, perhaps through the cross-linking of FtsZ protofilaments. Its function overlaps with FtsA. The chain is Cell division protein SepF from Nocardia farcinica (strain IFM 10152).